The sequence spans 599 residues: Kelch-like protein 24a (599 aa).

The 68-residue stretch at 65 to 132 folds into the BTB domain; it reads TDVIISVQGR…VYTGRACITT (68 aa). The BACK domain occupies 167 to 269; it reads CLGIQRFADA…HPNYFVQTVE (103 aa). Kelch repeat units lie at residues 313-362, 364-406, 407-453, 455-501, 503-543, and 545-591; these read VIVV…ALRN, IILS…VLLG, KVYA…SCAG, LFVI…SLNH, IYVC…VCNG, and IYIL…TVHR.

As to quaternary structure, forms homodimers. Component of the BCR(KLHL24) E3 ubiquitin ligase complex.

It is found in the perikaryon. The protein localises to the cell projection. It localises to the axon. Its subcellular location is the cytoplasm. The protein resides in the cell junction. It is found in the desmosome. The protein localises to the adherens junction. Functionally, necessary to maintain the balance between intermediate filament stability and degradation, a process that is essential for skin integrity. Reduces kainate receptor-mediated currents in brain neurons, most probably by modulating channel properties. It is required for proper heart development. This Danio rerio (Zebrafish) protein is Kelch-like protein 24a.